The primary structure comprises 272 residues: SPbeta prophage-derived aminoglycoside N(3')-acetyltransferase-like protein YokD (272 aa).

CoA-binding positions include 38-44 (LSSIGWV) and Gln113.

This sequence belongs to the antibiotic N-acetyltransferase family. As to quaternary structure, homodimer.

Functionally, may contribute to antibiotic resistance. The sequence is that of SPbeta prophage-derived aminoglycoside N(3')-acetyltransferase-like protein YokD (yokD) from Bacillus subtilis (strain 168).